A 635-amino-acid chain; its full sequence is Protein MICRORCHIDIA 1 (635 aa).

The interval 491 to 511 is disordered; sequence RTVIPDQPPTVNTYNPSPLPS. A coiled-coil region spans residues 588 to 635; that stretch reads MRCEEYVKKENEVEQTVKSLEKELEEIKSKCAQLALLVDAKKKEMQQV.

The protein belongs to the MORC ATPase protein family. In terms of assembly, homodimer and heterodimer with MORC6. Component of an RNA-directed DNA methylation (RdDM) complex that contains at least MORC6, MORC1/CRT1, MORC2, SWI3D and SUVH9. Binds directly to SUVH2 and SUVH9. Interacts with the resistance proteins RCY1, RPM1, SNC1, RPP8, SSI4 and RPS2. The interactions with various resistance proteins are disrupted when these resistance proteins are activated. Interacts with the PAMP recognition receptor FLS2. Mg(2+) serves as cofactor. Mn(2+) is required as a cofactor. As to expression, expressed constitutively.

It is found in the nucleus. The protein resides in the endosome. Functionally, mediator of defense signaling triggered by distinct classes of R proteins. Required during hypersensitive response (HR) that confers disease resistance to turnip crinkle virus (TCV). Exhibits ATPase activity. Contributes to resistance against Pseudomonas syringae and Hyaloperonospora arabidopsidis, at early stages prior to cytosolic calcium ions Ca(2+) accumulation. Required for pathogen-associated molecular pattern (PAMP)-triggered immunity (PTI), basal resistance, non-host resistance and systemic acquired resistance (SAR). Binds DNA/RNA in a non-specific manner and exhibits endonuclease activity. Probably involved in DNA repair. Required for both RPP8- and SSI4-mediated resistance responses, thus being involved in both TIR- and CC-NB-LRR pathways. Involved in RNA-directed DNA methylation (RdDM) as a component of the RdDM machinery and required for gene silencing. May also be involved in the regulation of chromatin architecture to maintain gene silencing. The sequence is that of Protein MICRORCHIDIA 1 from Arabidopsis thaliana (Mouse-ear cress).